Consider the following 132-residue polypeptide: Inactive D-aminoacyl-tRNA deacylase (132 aa).

This sequence belongs to the DTD family.

Its function is as follows. A non-functional D-aminoacyl-tRNA deacylase. This chain is Inactive D-aminoacyl-tRNA deacylase, found in Bacillus subtilis (strain 168).